A 345-amino-acid polypeptide reads, in one-letter code: Uroporphyrinogen decarboxylase (345 aa).

Substrate-binding positions include 27-31 (RQAGR), D77, Y152, S207, and H323.

The protein belongs to the uroporphyrinogen decarboxylase family. Homodimer.

It localises to the cytoplasm. It carries out the reaction uroporphyrinogen III + 4 H(+) = coproporphyrinogen III + 4 CO2. It functions in the pathway porphyrin-containing compound metabolism; protoporphyrin-IX biosynthesis; coproporphyrinogen-III from 5-aminolevulinate: step 4/4. Functionally, catalyzes the decarboxylation of four acetate groups of uroporphyrinogen-III to yield coproporphyrinogen-III. The protein is Uroporphyrinogen decarboxylase of Maricaulis maris (strain MCS10) (Caulobacter maris).